Consider the following 47-residue polypeptide: Light-harvesting protein B800/850/890 alpha-2 chain (47 aa).

Topologically, residues 1–12 (MWRMWKILDYRR) are cytoplasmic. Residues 13 to 33 (TVVLAHVGMAVLALLIHFILL) form a helical membrane-spanning segment. Position 29 (histidine 29) interacts with a bacteriochlorophyll. The Periplasmic portion of the chain corresponds to 34–47 (STESFNWLEGNPYG).

This sequence belongs to the antenna complex alpha subunit family. The core complex is formed by different alpha and beta chains, binding bacteriochlorophyll molecules, and arranged most probably in tetrameric structures disposed around the reaction center. The non-pigmented gamma chains may constitute additional components.

Its subcellular location is the cell inner membrane. Its function is as follows. Antenna complexes are light-harvesting systems, which transfer the excitation energy to the reaction centers. This Halorhodospira halophila (strain DSM 244 / SL1) (Ectothiorhodospira halophila (strain DSM 244 / SL1)) protein is Light-harvesting protein B800/850/890 alpha-2 chain.